The primary structure comprises 597 residues: Probable E3 ubiquitin-protein ligase ARI1 (597 aa).

Residues S119–Q333 form a TRIAD supradomain region. The Zn(2+) site is built by C123, C126, C140, H142, C145, C148, C167, C172, C214, C220, C236, C238, C243, C246, H251, C256, C283, and C286. The RING-type 1 zinc finger occupies C123 to C172. The IBR-type zinc finger occupies A194–C256. The RING-type 2; atypical zinc finger occupies C283 to C311. Residue C296 is part of the active site. The Zn(2+) site is built by C301, C303, C308, C311, H319, and C329. Positions F536–G575 are disordered. The segment covering D540–Q568 has biased composition (polar residues).

Belongs to the RBR family. Ariadne subfamily. Zn(2+) serves as cofactor. Ubiquitous.

It carries out the reaction [E2 ubiquitin-conjugating enzyme]-S-ubiquitinyl-L-cysteine + [acceptor protein]-L-lysine = [E2 ubiquitin-conjugating enzyme]-L-cysteine + [acceptor protein]-N(6)-ubiquitinyl-L-lysine.. It participates in protein modification; protein ubiquitination. In terms of biological role, might act as an E3 ubiquitin-protein ligase, or as part of E3 complex, which accepts ubiquitin from specific E2 ubiquitin-conjugating enzymes and then transfers it to substrates. This chain is Probable E3 ubiquitin-protein ligase ARI1 (ARI1), found in Arabidopsis thaliana (Mouse-ear cress).